A 352-amino-acid polypeptide reads, in one-letter code: Histidine biosynthesis bifunctional protein HisB (352 aa).

The tract at residues M1 to F164 is histidinol-phosphatase. D9 acts as the Nucleophile in catalysis. Residues D9 and D11 each coordinate Mg(2+). D11 (proton donor) is an active-site residue. Positions 93, 95, 101, and 103 each coordinate Zn(2+). Residue D130 coordinates Mg(2+). The tract at residues R165–I352 is imidazoleglycerol-phosphate dehydratase.

The protein in the N-terminal section; belongs to the histidinol-phosphatase family. It in the C-terminal section; belongs to the imidazoleglycerol-phosphate dehydratase family. It depends on Mg(2+) as a cofactor. Zn(2+) is required as a cofactor.

It is found in the cytoplasm. The enzyme catalyses D-erythro-1-(imidazol-4-yl)glycerol 3-phosphate = 3-(imidazol-4-yl)-2-oxopropyl phosphate + H2O. The catalysed reaction is L-histidinol phosphate + H2O = L-histidinol + phosphate. Its pathway is amino-acid biosynthesis; L-histidine biosynthesis; L-histidine from 5-phospho-alpha-D-ribose 1-diphosphate: step 6/9. It participates in amino-acid biosynthesis; L-histidine biosynthesis; L-histidine from 5-phospho-alpha-D-ribose 1-diphosphate: step 8/9. This is Histidine biosynthesis bifunctional protein HisB from Campylobacter jejuni subsp. jejuni serotype O:6 (strain 81116 / NCTC 11828).